Here is an 80-residue protein sequence, read N- to C-terminus: Acyl carrier protein (80 aa).

Positions Glu4 to Lys79 constitute a Carrier domain. Ser39 bears the O-(pantetheine 4'-phosphoryl)serine mark.

The protein belongs to the acyl carrier protein (ACP) family. 4'-phosphopantetheine is transferred from CoA to a specific serine of apo-ACP by AcpS. This modification is essential for activity because fatty acids are bound in thioester linkage to the sulfhydryl of the prosthetic group.

It is found in the cytoplasm. It participates in lipid metabolism; fatty acid biosynthesis. Carrier of the growing fatty acid chain in fatty acid biosynthesis. The protein is Acyl carrier protein of Prosthecochloris aestuarii (strain DSM 271 / SK 413).